A 201-amino-acid polypeptide reads, in one-letter code: Ras-like GTP-binding protein YPT1 (201 aa).

Residues 15 to 23, 33 to 40, 63 to 67, 121 to 124, and 151 to 153 contribute to the GTP site; these read GDSGVGKSC, YTESYIST, DTAGQ, NKSD, and SAK. An Effector region motif is present at residues 37-45; sequence YISTIGVDF. 2 S-geranylgeranyl cysteine lipidation sites follow: cysteine 200 and cysteine 201.

Belongs to the small GTPase superfamily. Rab family.

It localises to the endoplasmic reticulum membrane. It is found in the golgi apparatus membrane. The protein resides in the cytoplasm. The protein localises to the preautophagosomal structure membrane. Rab activation is generally mediated by a guanine exchange factor (GEF), while inactivation through hydrolysis of bound GTP is catalyzed by a GTPase activating protein (GAP). In terms of biological role, the small GTPases Rab are key regulators of intracellular membrane trafficking, from the formation of transport vesicles to their fusion with membranes. Rabs cycle between an inactive GDP-bound form and an active GTP-bound form that is able to recruit to membranes different set of downstream effectors directly responsible for vesicle formation, movement, tethering and fusion. YPT1 regulates the trafficking of secretory vesicles from the endoplasmic reticulum (ER) to the Golgi. Plays a role in the initial events of the autophagic vacuole development which take place at specialized regions of the endoplasmic reticulum. Also involved in the recycling of membrane proteins. In Phytophthora infestans (Potato late blight agent), this protein is Ras-like GTP-binding protein YPT1 (YPT1).